Reading from the N-terminus, the 523-residue chain is DNA-(apurinic or apyrimidinic site) endonuclease 2 (523 aa).

Position 42 (Glu-42) interacts with Mg(2+). Tyr-151 is an active-site residue. Residues Asp-191, Asn-193, and Asp-294 each contribute to the Mg(2+) site. Residue Asp-191 is the Proton donor/acceptor of the active site. The disordered stretch occupies residues 348–392; that stretch reads MKKNKNNSPTQSENVSASASSGSSPTVSRANSVIDVDAYPPEKRR. Residues 353-362 show a composition bias toward polar residues; sequence NNSPTQSENV. Zn(2+) contacts are provided by Cys-458, His-461, Cys-484, and Cys-508. The segment at 458–517 adopts a GRF-type zinc-finger fold; sequence CEGHKEPCKYLTVRKPGINYGRKFWICARPVGELIKNSNAVSEEDTQPFQCRFFIWDSDW.

It belongs to the DNA repair enzymes AP/ExoA family. Mg(2+) serves as cofactor. Requires Mn(2+) as cofactor.

It is found in the nucleus. It carries out the reaction Exonucleolytic cleavage in the 3'- to 5'-direction to yield nucleoside 5'-phosphates.. Its function is as follows. DNA repair enzyme that cleaves apurinic/apyrimidinic (AP) sites and removes 3'-blocking groups present at single strand breaks of damaged DNA. Provides the majority of the AP-endonuclease (APE) activity. Repairs phleomycin D1-induced DNA damage. Plays a role in oxidative damage repair. The sequence is that of DNA-(apurinic or apyrimidinic site) endonuclease 2 (apn2) from Schizosaccharomyces pombe (strain 972 / ATCC 24843) (Fission yeast).